The primary structure comprises 510 residues: Cytochrome P450 monooxygenase btcC (510 aa).

A helical membrane pass occupies residues 1–21; it reads MSFPGVIFVVSFFPLLMGIAV. Heme is bound at residue Cys446.

It belongs to the cytochrome P450 family. It depends on heme as a cofactor.

Its subcellular location is the membrane. Its pathway is secondary metabolite biosynthesis; terpenoid biosynthesis. In terms of biological role, cytochrome P450 monooxygenase; part of the gene cluster that mediates the biosynthesis of betaestacins. The bifunctional terpene synthase btcA converts isopentenyl diphosphate (IPP) and dimethylallyl diphosphate (DMAPP) into the sesterterpene betaestacin I. The C-terminal prenyltransferase (PT) domain of btcA catalyzes formation of GFPP, whereas the N-terminal terpene cyclase (TC) domain catalyzes the cyclization of GFPP into betaestacin I. The cytochrome P450 monooxygenase btcB is then responsible for the six-step oxidation of betaestacin I to yield betaestacin II. The roles of the cytochrome P450 monooxygenase btcC and the alpha-ketoglutarate-dependent dioxygenase btcD have not been identified yet. In Neocamarosporium betae (Beet black rot fungus), this protein is Cytochrome P450 monooxygenase btcC.